Consider the following 95-residue polypeptide: Succinate dehydrogenase membrane anchor subunit (95 aa).

The Mitochondrial matrix segment spans residues 1 to 19 (MYKTLLAQVFFHSIAKKKL). The helical transmembrane segment at 20–40 (YFFWLPRLFSLLLVPGFLFDI) threads the bilayer. Position 41 (glutamate 41) is a topological domain, mitochondrial intermembrane. A helical membrane pass occupies residues 42-62 (ILFLFHPIILLHASLGLSVII). Heme is bound at residue histidine 53. At 63–74 (EDYIHIETIKFQ) the chain is on the mitochondrial matrix side. Tyrosine 65 provides a ligand contact to a ubiquinone. A helical membrane pass occupies residues 75–95 (YLSLIKLLLVLLINLNILYLL).

In terms of assembly, part of an enzyme complex containing four subunits: a flavoprotein, an iron-sulfur protein, plus two membrane-anchoring proteins. Heme is required as a cofactor.

It localises to the mitochondrion inner membrane. It functions in the pathway carbohydrate metabolism; tricarboxylic acid cycle. Membrane-anchoring subunit of succinate dehydrogenase (SDH). The chain is Succinate dehydrogenase membrane anchor subunit (SDH4) from Porphyra purpurea (Red seaweed).